We begin with the raw amino-acid sequence, 31 residues long: Cyclotide cter-R (31 aa).

The cyclopeptide (Gly-Asn) cross-link spans 1–31 (GIPCGESCVFIPCTVTALLGCSCKDKVCYKN). 3 cysteine pairs are disulfide-bonded: cysteine 4–cysteine 21, cysteine 8–cysteine 23, and cysteine 13–cysteine 28.

In terms of processing, this is a cyclic peptide.

The protein resides in the secreted. Its function is as follows. Probably participates in a plant defense mechanism. This Clitoria ternatea (Butterfly pea) protein is Cyclotide cter-R.